Reading from the N-terminus, the 630-residue chain is Heat shock cognate 70 kDa protein 3 (630 aa).

The interval 611–630 is disordered; sequence FYQGNNNPKPTTTTFNQDLD. Positions 615–630 are enriched in low complexity; it reads NNNPKPTTTTFNQDLD.

This sequence belongs to the heat shock protein 70 family.

Its function is as follows. May function in protein folding and assembly, and disassembly of protein complexes. The sequence is that of Heat shock cognate 70 kDa protein 3 from Dictyostelium discoideum (Social amoeba).